The chain runs to 1072 residues: E3 ubiquitin-protein ligase RNF31 (1072 aa).

The tract at residues 1–485 (MPGEEEERAF…PEKQRQDKMR (485 aa)) is polyubiquitin-binding. The PUB domain maps to 71-142 (TLSTALNILE…SFPEGQEEPD (72 aa)). The disordered stretch occupies residues 263–290 (QGTHLSPSLPASAQPRPQSTSLLALGDS). A compositionally biased stretch (polar residues) spans 265-280 (THLSPSLPASAQPRPQ). Over residues 281–290 (STSLLALGDS) the composition is skewed to low complexity. RanBP2-type zinc fingers lie at residues 299–329 (SAHL…PRGC) and 350–379 (ARGR…PRLA). Residue serine 383 is modified to Phosphoserine. Residues 409–438 (QSQVWYCIHCTFCNSSPGWVCVMCNRTSSP) form a RanBP2-type 3 zinc finger. The tract at residues 443-484 (HAPRPYASSLEKGPPKPGPPRRLSAPLPSSCGDPEKQRQDKM) is disordered. A compositionally biased stretch (low complexity) spans 463–472 (RRLSAPLPSS). At serine 466 the chain carries Phosphoserine. Basic and acidic residues predominate over residues 475-484 (DPEKQRQDKM). Residues 563-616 (GNLDEAVEECVRTRRRKVQELQSLGFGPEEGSLQALFQHGGDVSRALTELQRQR) form an interaction with RBCK1 region. The UBA domain occupies 564-615 (NLDEAVEECVRTRRRKVQELQSLGFGPEEGSLQALFQHGGDVSRALTELQRQ). The segment at 695–929 (LAQECAVCGW…KSLHGHHPRD (235 aa)) is TRIAD supradomain. Zn(2+)-binding residues include cysteine 699, cysteine 702, cysteine 717, cysteine 719, cysteine 722, and cysteine 725. Residues 699–749 (CAVCGWALPHNRMQALTSCECTICPDCFRQHFTIALKEKHITDMVCPACGR) form an RING-type 1 zinc finger. Lysine 735 participates in a covalent cross-link: (Microbial infection) Glycyl lysine isopeptide (Lys-Gly) (interchain with G-Cter in ubiquitin). Positions 744 and 747 each coordinate Zn(2+). The IBR-type zinc-finger motif lies at 779-841 (ALFHKKLTEG…WEEQHRGRSC (63 aa)). Lysine 783 is covalently cross-linked ((Microbial infection) Glycyl lysine isopeptide (Lys-Gly) (interchain with G-Cter in ubiquitin)). Zn(2+)-binding residues include cysteine 799, cysteine 802, cysteine 817, cysteine 820, cysteine 825, cysteine 828, histidine 836, cysteine 841, cysteine 871, and cysteine 874. The RING-type 2; atypical zinc finger occupies 871 to 901 (CPKCKFSYALARGGCMHFHCTQCRHQFCSGC). A (Microbial infection) Glycyl lysine isopeptide (Lys-Gly) (interchain with G-Cter in ubiquitin) cross-link involves residue lysine 875. Cysteine 885 is a catalytic residue. Residues cysteine 890, cysteine 893, cysteine 898, cysteine 901, cysteine 916, and histidine 925 each coordinate Zn(2+). The segment at 910 to 1072 (KCPEPNCRVK…LGQSIPRRRK (163 aa)) is LDD domain.

It belongs to the RBR family. In terms of assembly, component of the LUBAC complex (linear ubiquitin chain assembly complex) which consists of SHARPIN, RBCK1 and RNF31. LUBAC has a MW of approximately 600 kDa suggesting a heteromultimeric assembly of its subunits. Associates with the TNF-R1 signaling complex (TNF-RSC) in a stimulation-dependent manner. Interacts (via the PUB domain) with OTULIN (via the PIM motif); the interaction is direct. Interacts (via the PUB domain) with VCP (via the PIM motif). Interacts (via the PUB domain) with SPATA2 (via the PIM motif); interaction is direct and bridges RNF31 and CYLD. Interacts with CYLD; the interaction is indirect and is mediated via SPATA2. Interacts with MUSK. Interacts with CARD11, promoting linear ubiquitination of BCL10. (Microbial infection) Interacts with S.flexneri E3 ubiquitin-protein ligases IpaH1.4 and IpaH2.5, leading to its ubiquitination. In terms of processing, autoubiquitinated. Interaction with OTULIN is required to suppress formation of 'Met-1'-linked polyubiquitin chains and prevent subsequent inactivation of the LUBAC complex. Post-translationally, cleaved by caspase during apoptosis. (Microbial infection) Ubiquitinated by S.flexneri E3 ubiquitin-protein ligases IpaH1.4 and IpaH2.5, leading to its degradation by the proteasome, thereby preventing formation of the bacterial ubiquitin coat and activation of innate immunity. In terms of tissue distribution, expressed in both normal and transformed breast epithelial cell lines.

It is found in the cytoplasm. The catalysed reaction is [E2 ubiquitin-conjugating enzyme]-S-ubiquitinyl-L-cysteine + [acceptor protein]-L-lysine = [E2 ubiquitin-conjugating enzyme]-L-cysteine + [acceptor protein]-N(6)-ubiquitinyl-L-lysine.. Its pathway is protein modification; protein ubiquitination. E3 ubiquitin-protein ligase component of the LUBAC complex which conjugates linear ('Met-1'-linked) polyubiquitin chains to substrates and plays a key role in NF-kappa-B activation and regulation of inflammation. LUBAC conjugates linear polyubiquitin to IKBKG and RIPK1 and is involved in activation of the canonical NF-kappa-B and the JNK signaling pathways. Linear ubiquitination mediated by the LUBAC complex interferes with TNF-induced cell death and thereby prevents inflammation. LUBAC is recruited to the TNF-R1 signaling complex (TNF-RSC) following polyubiquitination of TNF-RSC components by BIRC2 and/or BIRC3 and to conjugate linear polyubiquitin to IKBKG and possibly other components contributing to the stability of the complex. The LUBAC complex is also involved in innate immunity by conjugating linear polyubiquitin chains at the surface of bacteria invading the cytosol to form the ubiquitin coat surrounding bacteria. LUBAC is not able to initiate formation of the bacterial ubiquitin coat, and can only promote formation of linear polyubiquitins on pre-existing ubiquitin. Recruited to the surface of bacteria by RNF213, which initiates the bacterial ubiquitin coat. The bacterial ubiquitin coat acts as an 'eat-me' signal for xenophagy and promotes NF-kappa-B activation. Together with OTULIN, the LUBAC complex regulates the canonical Wnt signaling during angiogenesis. RNF31 is required for linear ubiquitination of BCL10, thereby promoting TCR-induced NF-kappa-B activation. Binds polyubiquitin of different linkage types. In Homo sapiens (Human), this protein is E3 ubiquitin-protein ligase RNF31.